The following is a 508-amino-acid chain: CXXC-type zinc finger protein 1 (508 aa).

A CXXC-type zinc finger spans residues 10–47; that stretch reads EDVWKERCMNCIRCNDEKNCGTCWPCRNGKTCDMRKCF. Disordered regions lie at residues 95–156 and 453–508; these read QQVE…EPDK and KSQS…TQNN. Low complexity-rich tracts occupy residues 113 to 123 and 454 to 481; these read AAAAAQQRKAN and SQSTSSSASAHGATTPISSTSSSSSSSS.

In terms of assembly, component of the SET2 complex (also known as the SET1/COMPASS complex), which contains at least set-2, swd-2.1, cfp-1, rbbp-5, wdr-5.1, dpy-30 and ash-2. Within the complex, interacts with wdr-5.1, ash-2 and dpy-30. Also interacts with the SIN3S complex, which contains at least sin-3, hda-1, athp-1 and mrg-1. Interacts with sin-3, hda-1 and mrg-1.

It localises to the nucleus. Functionally, transcriptional activator that exhibits a unique DNA binding specificity for CpG motifs; enriched at promoters containing the trimethylation mark on histone H3 'Lys-4' (H3K4me3). Forms part of the SET2 complex and interacts with the SIN3S HDAC complex at promoters. Required for H3K4 trimethylation and plays a repressive role in the expression of heat shock and salt-inducible genes. Required for fertility, in cooperation with class I histone deacetylases (HDACs). In Caenorhabditis elegans, this protein is CXXC-type zinc finger protein 1.